The sequence spans 122 residues: Flowering-promoting factor 1-like protein 3 (122 aa).

The segment at 16-36 (ENPGSEESSSAGDGGGGGRRK) is disordered.

Belongs to the FPF1 family.

The sequence is that of Flowering-promoting factor 1-like protein 3 from Oryza sativa subsp. japonica (Rice).